Consider the following 640-residue polypeptide: Influenza virus NS1A-binding protein homolog B (640 aa).

The 69-residue stretch at 32 to 100 (CDVRLLVCGH…AYTAQLKADK (69 aa)) folds into the BTB domain. The region spanning 135–186 (AISYRNFASSMADGRLLGKIDGYIQDHLHEISEQDDFLKLPRLKLEVMLEDN) is the BACK domain. Residues 257 to 278 (KKPPRERDEMGSGASGSISPSN) form a disordered region. Residues 267-278 (GSGASGSISPSN) are compositionally biased toward low complexity. 6 Kelch repeats span residues 366-412 (KLIA…VLMG), 413-460 (EVYV…SLQN), 462-509 (LFVV…ELSG), 510-556 (YMYV…VYEG), 557-603 (KLFV…VLNN), and 605-640 (LCAV…LGKN).

The protein localises to the cytoplasm. The protein resides in the cytoskeleton. It localises to the nucleus. Plays a role in cell division and in the dynamic organization of the actin skeleton as a stabilizer of actin filaments by association with F-actin through Kelch repeats. The chain is Influenza virus NS1A-binding protein homolog B (ivns1abpb) from Danio rerio (Zebrafish).